A 657-amino-acid polypeptide reads, in one-letter code: Hemocyanin (657 aa).

An N-linked (GlcNAc...) asparagine glycan is attached at asparagine 167. 6 residues coordinate Cu cation: histidine 194, histidine 198, histidine 224, histidine 344, histidine 348, and histidine 384. Intrachain disulfides connect cysteine 483-cysteine 502 and cysteine 562-cysteine 609.

It belongs to the tyrosinase family. Hemocyanin subfamily. As to quaternary structure, it consists of at least four very similar subunits. Hemolymph.

It is found in the secreted. The protein resides in the extracellular space. In terms of biological role, hemocyanins are copper-containing oxygen carriers occurring freely dissolved in the hemolymph of many mollusks and arthropods. The polypeptide is Hemocyanin (Palinurus vulgaris (European spiny lobster)).